The sequence spans 443 residues: ATP-dependent protease ATPase subunit HslU (443 aa).

ATP contacts are provided by residues I18, 60 to 65 (GVGKTE), D256, E321, and R393.

This sequence belongs to the ClpX chaperone family. HslU subfamily. As to quaternary structure, a double ring-shaped homohexamer of HslV is capped on each side by a ring-shaped HslU homohexamer. The assembly of the HslU/HslV complex is dependent on binding of ATP.

The protein resides in the cytoplasm. Functionally, ATPase subunit of a proteasome-like degradation complex; this subunit has chaperone activity. The binding of ATP and its subsequent hydrolysis by HslU are essential for unfolding of protein substrates subsequently hydrolyzed by HslV. HslU recognizes the N-terminal part of its protein substrates and unfolds these before they are guided to HslV for hydrolysis. This Pasteurella multocida (strain Pm70) protein is ATP-dependent protease ATPase subunit HslU.